A 138-amino-acid chain; its full sequence is Eukaryotic translation initiation factor 1A (138 aa).

Residues 1-15 are compositionally biased toward basic residues; that stretch reads MPKNKGKGGKNRRRG. The tract at residues 1–28 is disordered; sequence MPKNKGKGGKNRRRGKNENENEKRELTY. The segment covering 16-27 has biased composition (basic and acidic residues); sequence KNENENEKRELT. An S1-like domain is found at 22-96; the sequence is EKRELTYAEE…EKGDVILKYT (75 aa).

This sequence belongs to the eIF-1A family.

Its function is as follows. Seems to be required for maximal rate of protein biosynthesis. Enhances ribosome dissociation into subunits and stabilizes the binding of the initiator Met-tRNA(I) to 40 S ribosomal subunits. The protein is Eukaryotic translation initiation factor 1A (tif11) of Schizosaccharomyces pombe (strain 972 / ATCC 24843) (Fission yeast).